Here is a 642-residue protein sequence, read N- to C-terminus: Threonine--tRNA ligase (642 aa).

Residues 1-61 form the TGS domain; that stretch reads MPVITLPDGS…ETDAELSIIT (61 aa). Residues 243–534 form a catalytic region; it reads DHRKIGKQLD…LIEEYAGRFP (292 aa). Positions 334, 385, and 511 each coordinate Zn(2+).

This sequence belongs to the class-II aminoacyl-tRNA synthetase family. In terms of assembly, homodimer. Zn(2+) is required as a cofactor.

The protein resides in the cytoplasm. The enzyme catalyses tRNA(Thr) + L-threonine + ATP = L-threonyl-tRNA(Thr) + AMP + diphosphate + H(+). Its function is as follows. Catalyzes the attachment of threonine to tRNA(Thr) in a two-step reaction: L-threonine is first activated by ATP to form Thr-AMP and then transferred to the acceptor end of tRNA(Thr). Also edits incorrectly charged L-seryl-tRNA(Thr). The polypeptide is Threonine--tRNA ligase (Shewanella sp. (strain ANA-3)).